We begin with the raw amino-acid sequence, 331 residues long: 2-isopropylmalate synthase (331 aa).

The Pyruvate carboxyltransferase domain maps to 1–80 (RDEVVRGRDV…YTRINTREIY (80 aa)). Residues histidine 15, histidine 17, and asparagine 51 each coordinate Mn(2+). The tract at residues 205–331 (QLEHVQFFSG…PSIEEVHRGV (127 aa)) is regulatory domain.

The protein belongs to the alpha-IPM synthase/homocitrate synthase family. LeuA type 1 subfamily. In terms of assembly, homotetramer. The cofactor is Mn(2+).

It is found in the cytoplasm. The enzyme catalyses 3-methyl-2-oxobutanoate + acetyl-CoA + H2O = (2S)-2-isopropylmalate + CoA + H(+). It participates in amino-acid biosynthesis; L-leucine biosynthesis; L-leucine from 3-methyl-2-oxobutanoate: step 1/4. Its function is as follows. Catalyzes the condensation of the acetyl group of acetyl-CoA with 3-methyl-2-oxobutanoate (2-oxoisovalerate) to form 3-carboxy-3-hydroxy-4-methylpentanoate (2-isopropylmalate). The chain is 2-isopropylmalate synthase from Thermus thermophilus.